The sequence spans 144 residues: Arginine decarboxylase proenzyme (144 aa).

Ser80 functions as the Schiff-base intermediate with substrate; via pyruvic acid in the catalytic mechanism. A Pyruvic acid (Ser); by autocatalysis modification is found at Ser80. The Proton acceptor; for processing activity role is filled by His85. Cys100 (proton donor; for catalytic activity) is an active-site residue.

The protein belongs to the prokaryotic AdoMetDC family. Type 1 subfamily. Heterooctamer of four alpha and four beta chains arranged as a tetramer of alpha/beta heterodimers. The cofactor is pyruvate. In terms of processing, is synthesized initially as an inactive proenzyme. Formation of the active enzyme involves a self-maturation process in which the active site pyruvoyl group is generated from an internal serine residue via an autocatalytic post-translational modification. Two non-identical subunits are generated from the proenzyme in this reaction, and the pyruvate is formed at the N-terminus of the alpha chain, which is derived from the carboxyl end of the proenzyme. The post-translation cleavage follows an unusual pathway, termed non-hydrolytic serinolysis, in which the side chain hydroxyl group of the serine supplies its oxygen atom to form the C-terminus of the beta chain, while the remainder of the serine residue undergoes an oxidative deamination to produce ammonia and the pyruvoyl group blocking the N-terminus of the alpha chain.

It carries out the reaction L-arginine + H(+) = agmatine + CO2. The protein operates within amine and polyamine biosynthesis; agmatine biosynthesis; agmatine from L-arginine: step 1/1. Functionally, specifically catalyzes the decarboxylation of L-arginine to agmatine. Has no S-adenosylmethionine decarboxylase (AdoMetDC) activity. This is Arginine decarboxylase proenzyme from Ignicoccus hospitalis (strain KIN4/I / DSM 18386 / JCM 14125).